A 506-amino-acid chain; its full sequence is Anaerobic nitric oxide reductase transcription regulator NorR (506 aa).

Asp-57 is modified (4-aspartylphosphate). Positions 187 to 416 constitute a Sigma-54 factor interaction domain; the sequence is MIGLSPNMMQ…LEHAIHRAVV (230 aa). Residues 215–222 and 278–287 contribute to the ATP site; these read GETGTGKE and ADNGTLFLDE. The segment at residues 481–500 is a DNA-binding region (H-T-H motif); it reads WAACARALETDVANLHRLAK.

It participates in nitrogen metabolism; nitric oxide reduction. In terms of biological role, required for the expression of anaerobic nitric oxide (NO) reductase, acts as a transcriptional activator for at least the norVW operon. Activation also requires sigma-54. In Citrobacter koseri (strain ATCC BAA-895 / CDC 4225-83 / SGSC4696), this protein is Anaerobic nitric oxide reductase transcription regulator NorR.